Consider the following 417-residue polypeptide: Glutamyl-tRNA(Gln) amidotransferase subunit D (417 aa).

The region spanning 73–400 (EKVWLLATGG…EEVPRVLTTP (328 aa)) is the Asparaginase/glutaminase domain. Catalysis depends on residues T83, T157, D158, and K236.

It belongs to the asparaginase 1 family. GatD subfamily. In terms of assembly, heterodimer of GatD and GatE.

It carries out the reaction L-glutamyl-tRNA(Gln) + L-glutamine + ATP + H2O = L-glutaminyl-tRNA(Gln) + L-glutamate + ADP + phosphate + H(+). Its function is as follows. Allows the formation of correctly charged Gln-tRNA(Gln) through the transamidation of misacylated Glu-tRNA(Gln) in organisms which lack glutaminyl-tRNA synthetase. The reaction takes place in the presence of glutamine and ATP through an activated gamma-phospho-Glu-tRNA(Gln). The GatDE system is specific for glutamate and does not act on aspartate. The polypeptide is Glutamyl-tRNA(Gln) amidotransferase subunit D (Pyrobaculum aerophilum (strain ATCC 51768 / DSM 7523 / JCM 9630 / CIP 104966 / NBRC 100827 / IM2)).